Reading from the N-terminus, the 364-residue chain is Chorismate synthase (364 aa).

Arg-48 serves as a coordination point for NADP(+). Residues 131 to 133 (RSS), 243 to 244 (NA), Gly-288, 303 to 307 (KPTSS), and Arg-329 each bind FMN.

Belongs to the chorismate synthase family. Homotetramer. FMNH2 serves as cofactor.

It catalyses the reaction 5-O-(1-carboxyvinyl)-3-phosphoshikimate = chorismate + phosphate. It participates in metabolic intermediate biosynthesis; chorismate biosynthesis; chorismate from D-erythrose 4-phosphate and phosphoenolpyruvate: step 7/7. Catalyzes the anti-1,4-elimination of the C-3 phosphate and the C-6 proR hydrogen from 5-enolpyruvylshikimate-3-phosphate (EPSP) to yield chorismate, which is the branch point compound that serves as the starting substrate for the three terminal pathways of aromatic amino acid biosynthesis. This reaction introduces a second double bond into the aromatic ring system. The chain is Chorismate synthase from Brucella melitensis biotype 2 (strain ATCC 23457).